The primary structure comprises 382 residues: Mannitol-1-phosphate 5-dehydrogenase (382 aa).

Position 3–14 (3–14) interacts with NAD(+); it reads ALHFGAGNIGRG. Lys-269 carries the post-translational modification N6-acetyllysine.

This sequence belongs to the mannitol dehydrogenase family.

The enzyme catalyses D-mannitol 1-phosphate + NAD(+) = beta-D-fructose 6-phosphate + NADH + H(+). This chain is Mannitol-1-phosphate 5-dehydrogenase, found in Escherichia coli O17:K52:H18 (strain UMN026 / ExPEC).